The chain runs to 696 residues: Polyphosphate kinase (696 aa).

Position 45 (asparagine 45) interacts with ATP. Positions 373 and 403 each coordinate Mg(2+). The PLD phosphodiesterase domain maps to proline 428–threonine 462. Histidine 433 functions as the Phosphohistidine intermediate in the catalytic mechanism. Residues tyrosine 466, arginine 562, and histidine 590 each coordinate ATP.

This sequence belongs to the polyphosphate kinase 1 (PPK1) family. Requires Mg(2+) as cofactor. Post-translationally, an intermediate of this reaction is the autophosphorylated ppk in which a phosphate is covalently linked to a histidine residue through a N-P bond.

The catalysed reaction is [phosphate](n) + ATP = [phosphate](n+1) + ADP. Its function is as follows. Catalyzes the reversible transfer of the terminal phosphate of ATP to form a long-chain polyphosphate (polyP). This Vibrio parahaemolyticus serotype O3:K6 (strain RIMD 2210633) protein is Polyphosphate kinase.